Consider the following 296-residue polypeptide: Enoyl-CoA hydratase domain-containing protein 2, mitochondrial (296 aa).

The N-terminal 17 residues, 1–17, are a transit peptide targeting the mitochondrion; it reads MLRVLPRALRLPCSWRF. Lysine 101 bears the N6-acetyllysine; alternate mark. At lysine 101 the chain carries N6-succinyllysine; alternate.

Belongs to the enoyl-CoA hydratase/isomerase family.

The protein localises to the mitochondrion. This chain is Enoyl-CoA hydratase domain-containing protein 2, mitochondrial (Echdc2), found in Mus musculus (Mouse).